A 145-amino-acid polypeptide reads, in one-letter code: Large ribosomal subunit protein uL15 (145 aa).

The segment at M1 to H58 is disordered. Composition is skewed to gly residues over residues R21 to S31 and S42 to G52.

The protein belongs to the universal ribosomal protein uL15 family. Part of the 50S ribosomal subunit.

In terms of biological role, binds to the 23S rRNA. In Desulforapulum autotrophicum (strain ATCC 43914 / DSM 3382 / VKM B-1955 / HRM2) (Desulfobacterium autotrophicum), this protein is Large ribosomal subunit protein uL15.